A 191-amino-acid polypeptide reads, in one-letter code: Shikimate kinase (191 aa).

14 to 19 (GSGKST) contacts ATP. Ser-18 lines the Mg(2+) pocket. The substrate site is built by Asp-36, Arg-60, and Gly-82. Arg-120 contacts ATP. Arg-147 contacts substrate.

The protein belongs to the shikimate kinase family. Monomer. It depends on Mg(2+) as a cofactor.

It localises to the cytoplasm. It catalyses the reaction shikimate + ATP = 3-phosphoshikimate + ADP + H(+). Its pathway is metabolic intermediate biosynthesis; chorismate biosynthesis; chorismate from D-erythrose 4-phosphate and phosphoenolpyruvate: step 5/7. Catalyzes the specific phosphorylation of the 3-hydroxyl group of shikimic acid using ATP as a cosubstrate. The chain is Shikimate kinase from Chlorobaculum tepidum (strain ATCC 49652 / DSM 12025 / NBRC 103806 / TLS) (Chlorobium tepidum).